We begin with the raw amino-acid sequence, 525 residues long: Nucleolar complex protein 4 homolog (525 aa).

3 helical membrane passes run Ala305 to Ile325, Phe356 to Ala376, and Leu384 to Ile404.

Belongs to the CBF/MAK21 family.

It localises to the nucleus membrane. The protein localises to the nucleus. It is found in the nucleolus. The protein is Nucleolar complex protein 4 homolog (noc4l) of Danio rerio (Zebrafish).